We begin with the raw amino-acid sequence, 191 residues long: UPF0312 protein Pmen_0419 (191 aa).

Residues Met-1–Ala-22 form the signal peptide.

Belongs to the UPF0312 family. Type 1 subfamily.

The protein localises to the periplasm. The chain is UPF0312 protein Pmen_0419 from Ectopseudomonas mendocina (strain ymp) (Pseudomonas mendocina).